The following is a 989-amino-acid chain: Voltage-gated delayed rectifier potassium channel KCNH1 (989 aa).

Residues 1–220 (MTMAGGRRGL…LHYCVFKTTW (220 aa)) lie on the Cytoplasmic side of the membrane. The region spanning 14–94 (QNTFLENIVR…QTFENYEMNS (81 aa)) is the PAS domain. The region spanning 93–145 (NSFEILMYKKNRTPVWFFVKIAPIRNEQDKVVLFLCTFSDITAFKQPIEDDSC) is the PAC domain. Residues 151–162 (FARLTRALTSSR) form a required for phosphatidylinositol bisphosphate binding region. Residues 221-241 (DWIILILTFYTAILVPYNVSF) traverse the membrane as a helical segment. Residues 242–248 (KTRQNNV) are Extracellular-facing. The chain crosses the membrane as a helical span at residues 249 to 269 (AWLVVDSIVDVIFLVDIVLNF). Residues 270–290 (HTTFVGPAGEVISDPKLIRMN) are Cytoplasmic-facing. Residues 291–309 (YLKTWFVIDLLSCLPYDVI) traverse the membrane as a helical segment. Residues 310–345 (NAFENVDEVSAFMGDPGKIGFADQIPPPLEGRESQG) lie on the Extracellular side of the membrane. The chain crosses the membrane as a helical; Voltage-sensor span at residues 346–368 (ISSLFSSLKVVRLLRLGRVARKL). The Cytoplasmic portion of the chain corresponds to 369–377 (DHYIEYGAA). A helical membrane pass occupies residues 378–399 (VLVLLVCVFGLAAHWMACIWYS). Residues 400–448 (IGDYEIFDEDTKTIRNNSWLYQLALDIGTPYQFNGSGSGKWEGGPSKNS) lie on the Extracellular side of the membrane. 2 N-linked (GlcNAc...) asparagine glycosylation sites follow: Asn-415 and Asn-433. An intramembrane region (pore-forming) is located at residues 449–470 (VYISSLYFTMTSLTSVGFGNIA). The Selectivity filter signature appears at 463-468 (SVGFGN). Residues 471 to 477 (PSTDIEK) are Extracellular-facing. A helical membrane pass occupies residues 478–498 (IFAVAIMMIGSLLYATIFGNV). Topologically, residues 499–989 (TTIFQQMYAN…ESDRDIFGAS (491 aa)) are cytoplasmic. The tract at residues 673 to 770 (KRDALQKVLE…LDDLDVEKGN (98 aa)) is calmodulin-binding. The interaction with cyclic nucleotide-binding pocket stretch occupies residues 699–701 (YNL). 2 stretches are compositionally biased toward basic and acidic residues: residues 857–879 (ESMETLPERTKAPGEATLKKTDS) and 887–901 (SDLRLDNVGETRSPQ). 2 disordered regions span residues 857–905 (ESME…DRSP) and 961–989 (RGSAQSPQETGEISRPQSPESDRDIFGAS). The CAD (involved in subunit assembly) stretch occupies residues 924-964 (ATVLEVKYELKEDIKALNAKMTSIEKQLSEILRILMSRGSA). Residues 962–979 (GSAQSPQETGEISRPQSP) show a composition bias toward polar residues. Phosphoserine is present on residues Ser-974, Ser-978, and Ser-981. The segment covering 980 to 989 (ESDRDIFGAS) has biased composition (basic and acidic residues).

This sequence belongs to the potassium channel family. H (Eag) (TC 1.A.1.20) subfamily. Kv10.1/KCNH1 sub-subfamily. Homomultimer. The potassium channel is composed of a homo- or heterotetrameric complex of pore-forming alpha subunits that can associate with modulating beta subunits. Heteromultimer with KCNH5/EAG2. Interacts with ALG10B. Interacts with RABEP1. Interacts (via C-terminus) with CTTN. Interacts (via C-terminal cytoplasmic region) with Ca(2+)-bound calmodulin. In terms of processing, channel activity is regulated via tyrosine phosphorylation/dephosphorylation by SRC and PTPN6. Detected in brain (at protein level). Highly expressed in olfactory bulb. Detected in brain cortex, hippocampus, brain stem, striatum, thalamus, hypothalamus and spinal cord.

It is found in the cell membrane. Its subcellular location is the nucleus inner membrane. The protein resides in the cell projection. It localises to the dendrite. The protein localises to the axon. It is found in the presynaptic cell membrane. Its subcellular location is the perikaryon. The protein resides in the postsynaptic density membrane. It localises to the early endosome membrane. It carries out the reaction K(+)(in) = K(+)(out). Channel activity is inhibited by interaction with Ca(2+)-bound calmodulin. Interaction of a single pore-forming alpha subunit with a calmodulin chain is sufficient to promote channel closure. Channel activity is not regulated by cyclic nucleotides. Channel activity is inhibited by binding intracellular phosphatidylinositol-3,5-bisphosphate and phosphatidylinositol-4,5-bisphosphate (PIP2), but is not inhibited by phosphatidylinositol 4-phosphate. In terms of biological role, pore-forming (alpha) subunit of a voltage-gated delayed rectifier potassium channel that mediates outward-rectifying potassium currents which, on depolarization, reaches a steady-state level and do not inactivate. The activation kinetics depend on the prepulse potential and external divalent cation concentration. With negative prepulses, the current activation is delayed and slowed down several fold, whereas more positive prepulses speed up activation. The time course of activation is biphasic with a fast and a slowly activating current component. Activates at more positive membrane potentials and exhibit a steeper activation curve. Channel properties are modulated by subunit assembly. Mediates IK(NI) current in myoblasts. Involved in the regulation of cell proliferation and differentiation, in particular adipogenic and osteogenic differentiation in bone marrow-derived mesenchymal stem cells (MSCs). In Mus musculus (Mouse), this protein is Voltage-gated delayed rectifier potassium channel KCNH1.